A 145-amino-acid polypeptide reads, in one-letter code: MIALIQRVSRASVVVDNQTIGAIDKGLLVLLGVEQQDTREKMEKLATKVMSYRVFSDENGKMNLNLEQVGGSLLVVSQFTLAADTGRGLRPSFSGAGTPDQALALYEEFVAFCRAKGVTTETGQFGADMQVSLVNDGPVTFNLQV.

A Gly-cisPro motif, important for rejection of L-amino acids motif is present at residues 137–138 (GP).

This sequence belongs to the DTD family. As to quaternary structure, homodimer.

The protein localises to the cytoplasm. The catalysed reaction is glycyl-tRNA(Ala) + H2O = tRNA(Ala) + glycine + H(+). It carries out the reaction a D-aminoacyl-tRNA + H2O = a tRNA + a D-alpha-amino acid + H(+). An aminoacyl-tRNA editing enzyme that deacylates mischarged D-aminoacyl-tRNAs. Also deacylates mischarged glycyl-tRNA(Ala), protecting cells against glycine mischarging by AlaRS. Acts via tRNA-based rather than protein-based catalysis; rejects L-amino acids rather than detecting D-amino acids in the active site. By recycling D-aminoacyl-tRNA to D-amino acids and free tRNA molecules, this enzyme counteracts the toxicity associated with the formation of D-aminoacyl-tRNA entities in vivo and helps enforce protein L-homochirality. This Shewanella baltica (strain OS223) protein is D-aminoacyl-tRNA deacylase.